The chain runs to 191 residues: MSLSPHQKTAGGLVLVVAVMGAASFAAVPFYNWFCRVTGFAGTTAVATEAPAEVLDRTVKVRFDASREAGMPWEFRPLQREMELKIGETGLAFYEAYNPTDRTVAGTASYNVTPDAAGGYFAKIACFCFTEQVLAPGERVEMPVTFYVDPAIIDDPDGRYVRQITLSYTFHETALTEEQAALAAESATDVN.

The Cytoplasmic portion of the chain corresponds to 1–9 (MSLSPHQKT). A helical; Signal-anchor for type II membrane protein membrane pass occupies residues 10 to 30 (AGGLVLVVAVMGAASFAAVPF). Topologically, residues 31-191 (YNWFCRVTGF…LAAESATDVN (161 aa)) are periplasmic.

It belongs to the COX11/CtaG family.

It is found in the cell inner membrane. Its function is as follows. Exerts its effect at some terminal stage of cytochrome c oxidase synthesis, probably by being involved in the insertion of the copper B into subunit I. In Cereibacter sphaeroides (strain ATCC 17029 / ATH 2.4.9) (Rhodobacter sphaeroides), this protein is Cytochrome c oxidase assembly protein CtaG.